The chain runs to 382 residues: Small ribosomal subunit protein mS35 (382 aa).

The segment covering 363 to 375 (GRGGKALPGGKGG) has biased composition (gly residues). Positions 363–382 (GRGGKALPGGKGGKMQRSKR) are disordered.

This sequence belongs to the mitochondrion-specific ribosomal protein mS35 family. Component of the mitochondrial small ribosomal subunit (mt-SSU). Mature N.crassa 74S mitochondrial ribosomes consist of a small (37S) and a large (54S) subunit. The 37S small subunit contains a 16S ribosomal RNA (16S mt-rRNA) and 32 different proteins. The 54S large subunit contains a 23S rRNA (23S mt-rRNA) and 42 different proteins.

Its subcellular location is the mitochondrion. In terms of biological role, component of the mitochondrial ribosome (mitoribosome), a dedicated translation machinery responsible for the synthesis of mitochondrial genome-encoded proteins, including at least some of the essential transmembrane subunits of the mitochondrial respiratory chain. The mitoribosomes are attached to the mitochondrial inner membrane and translation products are cotranslationally integrated into the membrane. The polypeptide is Small ribosomal subunit protein mS35 (rsm24) (Neurospora crassa (strain ATCC 24698 / 74-OR23-1A / CBS 708.71 / DSM 1257 / FGSC 987)).